The chain runs to 736 residues: Acyl-coenzyme A oxidase (736 aa).

Belongs to the acyl-CoA oxidase family. It depends on FAD as a cofactor.

The protein localises to the peroxisome. The enzyme catalyses a 2,3-saturated acyl-CoA + O2 = a (2E)-enoyl-CoA + H2O2. It participates in lipid metabolism; peroxisomal fatty acid beta-oxidation. This Kluyveromyces lactis (strain ATCC 8585 / CBS 2359 / DSM 70799 / NBRC 1267 / NRRL Y-1140 / WM37) (Yeast) protein is Acyl-coenzyme A oxidase (POX1).